A 456-amino-acid polypeptide reads, in one-letter code: tRNA modification GTPase MnmE (456 aa).

Residues Arg-23, Glu-80, and Lys-122 each coordinate (6S)-5-formyl-5,6,7,8-tetrahydrofolate. Residues Ala-218 to Lys-380 enclose the TrmE-type G domain. Asn-228 lines the K(+) pocket. Residues Asn-228 to Ser-233, Thr-247 to Thr-253, and Asp-272 to Gly-275 contribute to the GTP site. Residue Ser-232 participates in Mg(2+) binding. K(+)-binding residues include Thr-247, Leu-249, and Thr-252. Mg(2+) is bound at residue Thr-253. Lys-456 provides a ligand contact to (6S)-5-formyl-5,6,7,8-tetrahydrofolate.

This sequence belongs to the TRAFAC class TrmE-Era-EngA-EngB-Septin-like GTPase superfamily. TrmE GTPase family. As to quaternary structure, homodimer. Heterotetramer of two MnmE and two MnmG subunits. The cofactor is K(+).

The protein localises to the cytoplasm. Exhibits a very high intrinsic GTPase hydrolysis rate. Involved in the addition of a carboxymethylaminomethyl (cmnm) group at the wobble position (U34) of certain tRNAs, forming tRNA-cmnm(5)s(2)U34. In Buchnera aphidicola subsp. Schizaphis graminum (strain Sg), this protein is tRNA modification GTPase MnmE.